The chain runs to 468 residues: Ribulose bisphosphate carboxylase large chain (468 aa).

Lys-5 carries the N6,N6,N6-trimethyllysine modification. Substrate contacts are provided by Asn-114 and Thr-164. The active-site Proton acceptor is the Lys-166. Lys-168 provides a ligand contact to substrate. Lys-192, Asp-194, and Glu-195 together coordinate Mg(2+). Lys-192 is modified (N6-carboxylysine). His-285 functions as the Proton acceptor in the catalytic mechanism. Residues Arg-286, His-318, and Ser-370 each coordinate substrate.

It belongs to the RuBisCO large chain family. Type I subfamily. Heterohexadecamer of 8 large chains and 8 small chains; disulfide-linked. The disulfide link is formed within the large subunit homodimers. Mg(2+) serves as cofactor. In terms of processing, the disulfide bond which can form in the large chain dimeric partners within the hexadecamer appears to be associated with oxidative stress and protein turnover.

The protein resides in the plastid. The protein localises to the chloroplast. The enzyme catalyses 2 (2R)-3-phosphoglycerate + 2 H(+) = D-ribulose 1,5-bisphosphate + CO2 + H2O. It carries out the reaction D-ribulose 1,5-bisphosphate + O2 = 2-phosphoglycolate + (2R)-3-phosphoglycerate + 2 H(+). RuBisCO catalyzes two reactions: the carboxylation of D-ribulose 1,5-bisphosphate, the primary event in carbon dioxide fixation, as well as the oxidative fragmentation of the pentose substrate in the photorespiration process. Both reactions occur simultaneously and in competition at the same active site. The sequence is that of Ribulose bisphosphate carboxylase large chain from Datura stramonium (Jimsonweed).